The chain runs to 175 residues: MEKLTVLNYTLNVITLMNSTLHTILEDPGMAYFPYIASVLTVLFTLHRASIPTMKIALKTSKCSYKVVKYCIVTIFNTLLKLADYKEQITTKDEIEKQMDRVAKEMRRQLEMIDKLTTREIEQVKLLKRIYDKLMVRATDGIDMTKEINQKNVKTLEEWKSGKNPYEPKEVTAAM.

Residues 1 to 28 lie on the Lumenal side of the membrane; sequence MEKLTVLNYTLNVITLMNSTLHTILEDP. N8 and N18 each carry an N-linked (GlcNAc...) asparagine; by host glycan. A helical; Signal-anchor for type III membrane protein membrane pass occupies residues 29–51; sequence GMAYFPYIASVLTVLFTLHRASI. Topologically, residues 52 to 175 are cytoplasmic; that stretch reads PTMKIALKTS…YEPKEVTAAM (124 aa). Residues E120 and Q123 each contribute to the Ca(2+) site.

The protein belongs to the rotavirus NSP4 family. In terms of assembly, homotetramer. Interacts with the immature particle in the viroplasm. Interacts with host CAV1, early and late in infection. Interacts with host integrin ITGA1/ITGB1 heterodimer. Interacts with host integrin ITGA2/ITGB1 heterodimer. Interaction with microtubules blocks trafficking to the Golgi apparatus. In terms of processing, the N-glycosyl content is primarily Man(9)GlcNAc, with a small amount of Man(8)GlcNAc.

The protein localises to the host rough endoplasmic reticulum membrane. It localises to the host membrane. It is found in the host caveola. Its subcellular location is the secreted. In terms of biological role, plays an essential role in the virus replication cycle by acting as a viroporin. Creates a pore in the host endoplasmic reticulum and as a consequence releases Ca(2+) in the cytoplasm of infected cell. In turn, high levels of cytoplasmic calcium trigger membrane trafficking and transport of viral ER-associated proteins to viroplasms, sites of viral genome replication and immature particle assembly. The secreted form acts as an enterotoxin that causes phospholipase C-dependent elevation of the intracellular calcium concentration in host intestinal mucosa cells. Increased concentration of intracellular calcium disrupts the cytoskeleton and the tight junctions, raising the paracellular permeability. Potentiates chloride ion secretion through a calcium ion-dependent signaling pathway, inducing age-dependent diarrhea. To perform this enterotoxigenic role in vivo, NSP4 is released from infected enterocytes in a soluble form capable of diffusing within the intestinal lumen and interacting with host plasma membrane receptors on neighboring epithelial cells such as integrins ITGA1/ITGB1 and ITGA2/ITGB1. The polypeptide is Non-structural glycoprotein 4 (Homo sapiens (Human)).